Here is a 397-residue protein sequence, read N- to C-terminus: 1-deoxy-D-xylulose 5-phosphate reductoisomerase (397 aa).

Thr-17, Gly-18, Ser-19, Ile-20, Asn-47, and Asn-130 together coordinate NADPH. Position 131 (Lys-131) interacts with 1-deoxy-D-xylulose 5-phosphate. Glu-132 contacts NADPH. Asp-156 is a Mn(2+) binding site. The 1-deoxy-D-xylulose 5-phosphate site is built by Ser-157, Glu-158, Ser-182, and His-205. Residue Glu-158 participates in Mn(2+) binding. An NADPH-binding site is contributed by Gly-211. 4 residues coordinate 1-deoxy-D-xylulose 5-phosphate: Ser-218, Asn-223, Lys-224, and Glu-227. Residue Glu-227 participates in Mn(2+) binding.

Belongs to the DXR family. It depends on Mg(2+) as a cofactor. Requires Mn(2+) as cofactor.

It catalyses the reaction 2-C-methyl-D-erythritol 4-phosphate + NADP(+) = 1-deoxy-D-xylulose 5-phosphate + NADPH + H(+). The protein operates within isoprenoid biosynthesis; isopentenyl diphosphate biosynthesis via DXP pathway; isopentenyl diphosphate from 1-deoxy-D-xylulose 5-phosphate: step 1/6. In terms of biological role, catalyzes the NADPH-dependent rearrangement and reduction of 1-deoxy-D-xylulose-5-phosphate (DXP) to 2-C-methyl-D-erythritol 4-phosphate (MEP). The polypeptide is 1-deoxy-D-xylulose 5-phosphate reductoisomerase (Rhizobium rhizogenes (strain K84 / ATCC BAA-868) (Agrobacterium radiobacter)).